Reading from the N-terminus, the 204-residue chain is MTEWETATPAVAETPDIKLFGKWSTDDVQINDISLQDYIAVKEKYAKYLPHSAGRYAANGFRKAQCPIVERLTNSMMMHGRNNGKKLMTVRIVKHAFEIIHLLTGENPLQVLVNAIINSGPREDSTRIGRAGTVRRQAVDVSPLRRVNQAIWLLCTGAREAAFRNIKTIAECLADELINARKGSSNSYAIKKKDELERVAKSNR.

N-acetylmethionine is present on Met1. Thr2 carries the post-translational modification N-acetylthreonine; in 40S ribosomal protein S5, N-terminally processed. Thr14 is subject to Phosphothreonine. Lys47 carries the post-translational modification N6-acetyllysine; alternate. A Glycyl lysine isopeptide (Lys-Gly) (interchain with G-Cter in SUMO2); alternate cross-link involves residue Lys47. Ser142 is modified (phosphoserine).

It belongs to the universal ribosomal protein uS7 family. In terms of assembly, component of the small ribosomal subunit. Part of the small subunit (SSU) processome, composed of more than 70 proteins and the RNA chaperone small nucleolar RNA (snoRNA) U3.

The protein resides in the cytoplasm. The protein localises to the nucleus. It localises to the nucleolus. Component of the small ribosomal subunit. The ribosome is a large ribonucleoprotein complex responsible for the synthesis of proteins in the cell. Part of the small subunit (SSU) processome, first precursor of the small eukaryotic ribosomal subunit. During the assembly of the SSU processome in the nucleolus, many ribosome biogenesis factors, an RNA chaperone and ribosomal proteins associate with the nascent pre-rRNA and work in concert to generate RNA folding, modifications, rearrangements and cleavage as well as targeted degradation of pre-ribosomal RNA by the RNA exosome. This is Small ribosomal subunit protein uS7 (Rps5) from Rattus norvegicus (Rat).